Reading from the N-terminus, the 432-residue chain is 3-phosphoshikimate 1-carboxyvinyltransferase (432 aa).

3-phosphoshikimate contacts are provided by Lys-21, Ser-22, and Arg-26. Residue Lys-21 coordinates phosphoenolpyruvate. Phosphoenolpyruvate-binding residues include Gly-93 and Arg-121. Positions 166, 168, 318, and 345 each coordinate 3-phosphoshikimate. Position 168 (Gln-168) interacts with phosphoenolpyruvate. The active-site Proton acceptor is Asp-318. 2 residues coordinate phosphoenolpyruvate: Arg-349 and Arg-391.

The protein belongs to the EPSP synthase family. In terms of assembly, monomer.

The protein localises to the cytoplasm. It carries out the reaction 3-phosphoshikimate + phosphoenolpyruvate = 5-O-(1-carboxyvinyl)-3-phosphoshikimate + phosphate. The protein operates within metabolic intermediate biosynthesis; chorismate biosynthesis; chorismate from D-erythrose 4-phosphate and phosphoenolpyruvate: step 6/7. Functionally, catalyzes the transfer of the enolpyruvyl moiety of phosphoenolpyruvate (PEP) to the 5-hydroxyl of shikimate-3-phosphate (S3P) to produce enolpyruvyl shikimate-3-phosphate and inorganic phosphate. The polypeptide is 3-phosphoshikimate 1-carboxyvinyltransferase (Persephonella marina (strain DSM 14350 / EX-H1)).